A 700-amino-acid chain; its full sequence is Mei4-dependent protein 6 (700 aa).

Kelch repeat units follow at residues 276–322 (CIYL…MVID), 327–381 (KLYL…FDHG), 390–439 (IVYV…KIER), 452–499 (KLYI…FCQR), 508–558 (RIFT…SRFG), and 569–619 (IIYL…RFHE).

This is Mei4-dependent protein 6 (mde6) from Schizosaccharomyces pombe (strain 972 / ATCC 24843) (Fission yeast).